The chain runs to 552 residues: Cilia- and flagella- associated protein 210 (552 aa).

4 coiled-coil regions span residues 53-143, 186-307, 348-409, and 460-488; these read DEWK…NAKQ, EEQL…KKRL, IARD…VMKA, and TEAL…TTNK. The tract at residues 216 to 238 is disordered; it reads KDHLKQIKEHEEEEERRKKYEEK.

Microtubule inner protein component of sperm flagellar doublet microtubules. As to expression, expressed in airway epithelial cells.

The protein resides in the cytoplasm. It localises to the cytoskeleton. Its subcellular location is the cilium axoneme. The protein localises to the flagellum axoneme. Microtubule inner protein (MIP) part of the dynein-decorated doublet microtubules (DMTs) in cilia axoneme, which is required for motile cilia beating. The polypeptide is Cilia- and flagella- associated protein 210 (Homo sapiens (Human)).